We begin with the raw amino-acid sequence, 163 residues long: Nucleotide-binding protein cbdbA1256 (163 aa).

Belongs to the YajQ family.

Functionally, nucleotide-binding protein. The sequence is that of Nucleotide-binding protein cbdbA1256 from Dehalococcoides mccartyi (strain CBDB1).